The following is a 165-amino-acid chain: Nucleotide-binding protein P9215_05621 (165 aa).

The protein belongs to the YajQ family.

In terms of biological role, nucleotide-binding protein. The chain is Nucleotide-binding protein P9215_05621 from Prochlorococcus marinus (strain MIT 9215).